Consider the following 181-residue polypeptide: CASP-like protein 1F2 (181 aa).

Residues 1–18 (MADIETKSSQNQPLKTQN) are Cytoplasmic-facing. A helical membrane pass occupies residues 19–39 (IFIGAQIFLRIVVIAASFAST). Topologically, residues 40 to 70 (WLMLTNKQTIDIGGFVLDANYSYSPEFKFLS) are extracellular. The N-linked (GlcNAc...) asparagine glycan is linked to asparagine 59. The helical transmembrane segment at 71-91 (YANIVVGAFSFVSLLFLVLVG) threads the bilayer. The Cytoplasmic segment spans residues 92 to 100 (RRSSNPTYY). The helical transmembrane segment at 101-121 (FILFLHDLALMSLVLGGCAAA) threads the bilayer. Topologically, residues 122–150 (TVIGSLGKYGNSHTGWMQICDHFGKFCKR) are extracellular. The chain crosses the membrane as a helical span at residues 151–171 (ATTSVAFSYFSLVCLLILTIT). Over 172–181 (SASKSRQIQV) the chain is Cytoplasmic.

This sequence belongs to the Casparian strip membrane proteins (CASP) family. In terms of assembly, homodimer and heterodimers.

The protein localises to the cell membrane. The sequence is that of CASP-like protein 1F2 from Populus trichocarpa (Western balsam poplar).